The primary structure comprises 302 residues: tRNA pseudouridine synthase B (302 aa).

Aspartate 38 functions as the Nucleophile in the catalytic mechanism.

It belongs to the pseudouridine synthase TruB family. Type 1 subfamily.

The enzyme catalyses uridine(55) in tRNA = pseudouridine(55) in tRNA. Responsible for synthesis of pseudouridine from uracil-55 in the psi GC loop of transfer RNAs. This chain is tRNA pseudouridine synthase B, found in Ligilactobacillus salivarius (strain UCC118) (Lactobacillus salivarius).